A 476-amino-acid polypeptide reads, in one-letter code: Glycogen synthase (476 aa).

K15 serves as a coordination point for ADP-alpha-D-glucose.

This sequence belongs to the glycosyltransferase 1 family. Bacterial/plant glycogen synthase subfamily.

The catalysed reaction is [(1-&gt;4)-alpha-D-glucosyl](n) + ADP-alpha-D-glucose = [(1-&gt;4)-alpha-D-glucosyl](n+1) + ADP + H(+). Its pathway is glycan biosynthesis; glycogen biosynthesis. Synthesizes alpha-1,4-glucan chains using ADP-glucose. The sequence is that of Glycogen synthase from Yersinia pseudotuberculosis serotype IB (strain PB1/+).